Consider the following 462-residue polypeptide: MLNNFLNLELLNISLSYPFLFLITTAIVLLLCSGFWKFHRSFYIGISSLSLIVSAFLILNNANAQGLEAKAFLATLNNDIVSFYASLVILCFSFLYLLMQKEENQGEFYALFLFMIASLLLMVSSSNLVLIFIGLESSSLALYTLIAMRGSDNAISSAIKYFSIAAVGAGFFVMAVAFIYLKTGTLDLSANLALKNEFQKDPMLLGAGVMIFVLCAIKLSLAPFHFWLKDVYYAAHTNLVAFISVVPKVAMLVVVIRLFDFLNNTGFEYIIIVLAIFSMLIGAFAALSQNNIKKMFAYSSVVHSSLVLIACIPLLKEQNFDGILLAIFGYWTLFAFANYAVFMILSNYENNSYESLNGLLVKKPLIAFCLSISVLSLAGIPPFGVFWGKFMILNTVILNGYWYLALFVALSSVIMLYAYLKILIHVLFMKNDRVYNIKFSFIQNFILAFCVCVSIFAILLML.

The next 13 helical transmembrane spans lie at 15–35, 42–62, 80–100, 113–133, 161–181, 204–224, 239–259, 267–287, 295–315, 323–343, 366–386, 396–416, and 441–461; these read LSYP…CSGF, FYIG…LNNA, IVSF…LLMQ, LFMI…LIFI, YFSI…FIYL, LLGA…LAPF, LVAF…IRLF, FEYI…FAAL, MFAY…IPLL, ILLA…AVFM, IAFC…FGVF, VILN…VIML, and FIQN…ILLM.

It belongs to the complex I subunit 2 family. In terms of assembly, NDH-1 is composed of 14 different subunits. Subunits NuoA, H, J, K, L, M, N constitute the membrane sector of the complex.

It is found in the cell inner membrane. The enzyme catalyses a quinone + NADH + 5 H(+)(in) = a quinol + NAD(+) + 4 H(+)(out). Its function is as follows. NDH-1 shuttles electrons from NADH, via FMN and iron-sulfur (Fe-S) centers, to quinones in the respiratory chain. The immediate electron acceptor for the enzyme in this species is believed to be ubiquinone. Couples the redox reaction to proton translocation (for every two electrons transferred, four hydrogen ions are translocated across the cytoplasmic membrane), and thus conserves the redox energy in a proton gradient. This chain is NADH-quinone oxidoreductase subunit N, found in Campylobacter jejuni (strain RM1221).